The sequence spans 180 residues: MALISSAAVTTVNRASSAQANLVAPFTGLKSSAGFPVTKKTNNDITSIASNGGRVNCMQVWPPVGKKKFETLSYLPPLTEEQLAKEVEYLIRKGWIPCLEFELEKGFVYRENHRSPGYYDGRYWTMWRLPLFGATDSSQVLKELADCKAEYPDSFIRIIGFDNVRQVQCISFIAHTPKNY.

The N-terminal 56 residues, 1-56, are a transit peptide targeting the chloroplast; it reads MALISSAAVTTVNRASSAQANLVAPFTGLKSSAGFPVTKKTNNDITSIASNGGRVN.

Belongs to the RuBisCO small chain family. As to quaternary structure, heterohexadecamer of 8 large and 8 small subunits.

Its subcellular location is the plastid. The protein localises to the chloroplast. Functionally, ruBisCO catalyzes two reactions: the carboxylation of D-ribulose 1,5-bisphosphate, the primary event in carbon dioxide fixation, as well as the oxidative fragmentation of the pentose substrate. Both reactions occur simultaneously and in competition at the same active site. Although the small subunit is not catalytic it is essential for maximal activity. The sequence is that of Ribulose bisphosphate carboxylase small subunit, chloroplastic from Medicago sativa (Alfalfa).